A 603-amino-acid polypeptide reads, in one-letter code: MTEAPVSRIRNFSIIAHIDHGKSTLADRLLQTTGTVAARDMKEQFLDNMDLERERGITIKLQAARMNYRGEDGEEYVLNLIDTPGHVDFSYEVSRSLAACEGALLVVDASQGVEAQTLANVYLALEHNLEIIPVLNKIDLPGAEPERVKQEIEEIIGLDCSGAVMASAKEGIGIAEILESIVHLVPPPQDTVSEPLRALIFDSYYDPYRGVVVYFRVMDGTVKQGDKIRLMASGKEYQIDELGVLSPAQVQVKELHAGEVGYLAAAIKAVTDARVGDTITLATAPAKTPLPGYEEAKPMVFCGMFPTDADQFEDLREALEKLRLNDAALQYEPETSSAMGFGFRCGFLGLLHMEIVQERLEREYNLDLIITAPSVVYRVTPLKGEVFMIDNPSTLPDPQHREKIEEPYVQVEMITPETYVGTLMELAQTRRGVFKDMKYLTPERTTLIYELPLAEIVTDFFDQMKSRSRGYASMEYQLIGYRENPLVKLDILINSDPVDSLAAIVHRDKAYGVGRALVSKLRELIPRHQFKIPIQAAIGSKVIASESIPALRKDVLAKCYGGDITRKKKLLEKQKAGKKRMKAVGSVDVPQEAFMAVLRLKDE.

In terms of domain architecture, tr-type G spans 7 to 189 (SRIRNFSIIA…SIVHLVPPPQ (183 aa)). GTP contacts are provided by residues 19–24 (DHGKST) and 136–139 (NKID).

Belongs to the TRAFAC class translation factor GTPase superfamily. Classic translation factor GTPase family. LepA subfamily.

Its subcellular location is the cell inner membrane. It catalyses the reaction GTP + H2O = GDP + phosphate + H(+). Its function is as follows. Required for accurate and efficient protein synthesis under certain stress conditions. May act as a fidelity factor of the translation reaction, by catalyzing a one-codon backward translocation of tRNAs on improperly translocated ribosomes. Back-translocation proceeds from a post-translocation (POST) complex to a pre-translocation (PRE) complex, thus giving elongation factor G a second chance to translocate the tRNAs correctly. Binds to ribosomes in a GTP-dependent manner. The polypeptide is Elongation factor 4 (Cyanothece sp. (strain PCC 7425 / ATCC 29141)).